The primary structure comprises 341 residues: UDP-3-O-acylglucosamine N-acyltransferase (341 aa).

The active-site Proton acceptor is the His-239.

It belongs to the transferase hexapeptide repeat family. LpxD subfamily. In terms of assembly, homotrimer.

It catalyses the reaction a UDP-3-O-[(3R)-3-hydroxyacyl]-alpha-D-glucosamine + a (3R)-hydroxyacyl-[ACP] = a UDP-2-N,3-O-bis[(3R)-3-hydroxyacyl]-alpha-D-glucosamine + holo-[ACP] + H(+). Its pathway is bacterial outer membrane biogenesis; LPS lipid A biosynthesis. Catalyzes the N-acylation of UDP-3-O-acylglucosamine using 3-hydroxyacyl-ACP as the acyl donor. Is involved in the biosynthesis of lipid A, a phosphorylated glycolipid that anchors the lipopolysaccharide to the outer membrane of the cell. The protein is UDP-3-O-acylglucosamine N-acyltransferase of Idiomarina loihiensis (strain ATCC BAA-735 / DSM 15497 / L2-TR).